A 404-amino-acid chain; its full sequence is MRTSGSRLFTSESVTEGHPDKICDAISDSILDALLAEDPRSRVAVETLVTTGQVHVAGEVTTSAYADIPRIVREKVLEIGYDSSAKGFDGNSCGVNIAIGAQSPDIAQGVDTSHEARVGGTDDEIAKQGAGDQGLMFGYATTDTPELMPLPIALAHRLSRKLTEVRKTGVLPYLRPDGKTQVTIEYDGDRPVRLDTVVISTQHAADIDLDNLLAPDIREKVVDAVLADLDLPSPLDTSDIRLLVNPTGKFVLGGPMGDAGLTGRKIIVDTYGGMARHGGGAFSGKDPSKVDRSAAYAMRWVAKNVVAAGLSERVEVQVAYAIGKAAPVGLFVETFGTEKVDPARIAAAITEVFDLRPGAIIRDLDLLRPIYAPTAAYGHFGRTDIDLPWEHTDRADKLRAAAGL.

Position 18 (histidine 18) interacts with ATP. Aspartate 20 provides a ligand contact to Mg(2+). Glutamate 46 contributes to the K(+) binding site. Glutamate 59 and glutamine 102 together coordinate L-methionine. The interval 102 to 112 is flexible loop; that stretch reads QSPDIAQGVDT. Residues 177–179, 249–250, aspartate 258, 264–265, alanine 281, and lysine 285 contribute to the ATP site; these read DGK, KF, and RK. Position 258 (aspartate 258) interacts with L-methionine. Lysine 289 contacts L-methionine.

Belongs to the AdoMet synthase family. In terms of assembly, homotetramer; dimer of dimers. It depends on Mg(2+) as a cofactor. K(+) is required as a cofactor.

It is found in the cytoplasm. The enzyme catalyses L-methionine + ATP + H2O = S-adenosyl-L-methionine + phosphate + diphosphate. The protein operates within amino-acid biosynthesis; S-adenosyl-L-methionine biosynthesis; S-adenosyl-L-methionine from L-methionine: step 1/1. Functionally, catalyzes the formation of S-adenosylmethionine (AdoMet) from methionine and ATP. The overall synthetic reaction is composed of two sequential steps, AdoMet formation and the subsequent tripolyphosphate hydrolysis which occurs prior to release of AdoMet from the enzyme. This chain is S-adenosylmethionine synthase, found in Nocardia farcinica (strain IFM 10152).